Consider the following 415-residue polypeptide: Methylthioribose-1-phosphate isomerase (415 aa).

The Proton donor role is filled by Asp-284.

This sequence belongs to the eIF-2B alpha/beta/delta subunits family. MtnA subfamily.

Its subcellular location is the cytoplasm. It is found in the nucleus. The enzyme catalyses 5-(methylsulfanyl)-alpha-D-ribose 1-phosphate = 5-(methylsulfanyl)-D-ribulose 1-phosphate. It functions in the pathway amino-acid biosynthesis; L-methionine biosynthesis via salvage pathway; L-methionine from S-methyl-5-thio-alpha-D-ribose 1-phosphate: step 1/6. Catalyzes the interconversion of methylthioribose-1-phosphate (MTR-1-P) into methylthioribulose-1-phosphate (MTRu-1-P). This is Methylthioribose-1-phosphate isomerase from Candida glabrata (strain ATCC 2001 / BCRC 20586 / JCM 3761 / NBRC 0622 / NRRL Y-65 / CBS 138) (Yeast).